The chain runs to 795 residues: Protocadherin beta-12 (795 aa).

The signal sequence occupies residues Met-1–Ala-26. Residues Gly-27–Leu-690 are Extracellular-facing. Cadherin domains lie at Val-35–Phe-133, Met-138–Phe-242, Tyr-247–Ile-347, Ile-352–Phe-451, and Tyr-456–Val-561. Asn-418, Asn-436, Asn-487, and Asn-567 each carry an N-linked (GlcNAc...) asparagine glycan. The region spanning Gly-568–Leu-671 is the Cadherin 6 domain. The helical transmembrane segment at Val-691–Val-711 threads the bilayer. At Arg-712–Phe-795 the chain is on the cytoplasmic side.

It is found in the cell membrane. Potential calcium-dependent cell-adhesion protein. May be involved in the establishment and maintenance of specific neuronal connections in the brain. This chain is Protocadherin beta-12 (PCDHB12), found in Homo sapiens (Human).